Here is a 516-residue protein sequence, read N- to C-terminus: Golgin-84 (516 aa).

The Cytoplasmic portion of the chain corresponds to 1-492; that stretch reads MSSWITGLAD…TFLRRYPMMR (492 aa). The tract at residues 28 to 80 is disordered; that stretch reads QTENATGSADPMRRSMTSSTQSLSTSLKSTLSPVRRSGANSSSSVKSDGGVSV. Low complexity predominate over residues 42–80; sequence SMTSSTQSLSTSLKSTLSPVRRSGANSSSSVKSDGGVSV. 2 positions are modified to phosphoserine: Ser64 and Ser74. Residues 108–423 adopt a coiled-coil conformation; that stretch reads TNELAAFKIA…KAQTQLQQNM (316 aa). The chain crosses the membrane as a helical; Anchor for type IV membrane protein span at residues 493–513; that stretch reads VSVIVYVALLHLWVMFVLLST. At 514 to 516 the chain is on the lumenal side; that stretch reads TPN.

The protein localises to the golgi apparatus membrane. Functionally, may be involved in maintaining Golgi structure and in intra-Golgi transport. The protein is Golgin-84 (Golgin84) of Drosophila melanogaster (Fruit fly).